The chain runs to 426 residues: Probable imidazolonepropionase (426 aa).

4-imidazolone-5-propanoate contacts are provided by Y158 and H192. Y158 contacts N-formimidoyl-L-glutamate. Residue H260 participates in Fe(3+) binding. Position 260 (H260) interacts with Zn(2+). E263 is a binding site for 4-imidazolone-5-propanoate. D334 is a binding site for Fe(3+). Residue D334 participates in Zn(2+) binding. N336 provides a ligand contact to N-formimidoyl-L-glutamate.

It belongs to the metallo-dependent hydrolases superfamily. HutI family. Zn(2+) serves as cofactor. Fe(3+) is required as a cofactor.

The catalysed reaction is 4-imidazolone-5-propanoate + H2O = N-formimidoyl-L-glutamate. It functions in the pathway amino-acid degradation; L-histidine degradation into L-glutamate; N-formimidoyl-L-glutamate from L-histidine: step 3/3. The sequence is that of Probable imidazolonepropionase (amdhd1) from Dictyostelium discoideum (Social amoeba).